Reading from the N-terminus, the 413-residue chain is MSDFIFTSESVTEGHPDKICDQISDAVLDALLTEDPESRVACETVVNTGLCLLTGEITSKAKVDYIKLVRNVIKEIGYEGYRAGGFDANSCAVLVALDEQSPDISQGVNDADDINDDLEDNTGAGDQGIMFGYACDETPELMPLPISLAHRLAIQLAKVRHEEVLNYLLPDGKTQVSIDYEKGLPVSINTILISTQHNSEIDGVTNEEEIRQRIKEDLWKNVVIPATEDLEIKPNISKTRFLVNPTGKFVVGGPQGDAGLTGRKIIVDTYGGYARHGGGAFSGKDPTKVDRSAAYAARYVAKSIVKAKLAKKAEVQLSYAIGVAKPISILVETFDTGVISQNNLTELIKEHFDLRPAAIIKEFNLRNLPKKMGGKFFRKTASYGHFGRRDLELPWENVEEKAAKLAEASKIFL.

H15 contacts ATP. D17 contributes to the Mg(2+) binding site. E43 is a K(+) binding site. L-methionine contacts are provided by E56 and Q100. Positions 100–110 (QSPDISQGVND) are flexible loop. ATP is bound by residues 171–173 (DGK), 248–249 (KF), D257, 263–264 (RK), A280, and K284. D257 provides a ligand contact to L-methionine. L-methionine is bound at residue K288.

This sequence belongs to the AdoMet synthase family. Homotetramer; dimer of dimers. The cofactor is Mg(2+). K(+) is required as a cofactor.

Its subcellular location is the cytoplasm. The enzyme catalyses L-methionine + ATP + H2O = S-adenosyl-L-methionine + phosphate + diphosphate. The protein operates within amino-acid biosynthesis; S-adenosyl-L-methionine biosynthesis; S-adenosyl-L-methionine from L-methionine: step 1/1. In terms of biological role, catalyzes the formation of S-adenosylmethionine (AdoMet) from methionine and ATP. The overall synthetic reaction is composed of two sequential steps, AdoMet formation and the subsequent tripolyphosphate hydrolysis which occurs prior to release of AdoMet from the enzyme. The chain is S-adenosylmethionine synthase from Prochlorococcus marinus (strain MIT 9301).